The following is a 154-amino-acid chain: NAD(P)H-quinone oxidoreductase subunit N (154 aa).

Belongs to the complex I NdhN subunit family. In terms of assembly, NDH-1 can be composed of about 15 different subunits; different subcomplexes with different compositions have been identified which probably have different functions.

Its subcellular location is the cellular thylakoid membrane. It catalyses the reaction a plastoquinone + NADH + (n+1) H(+)(in) = a plastoquinol + NAD(+) + n H(+)(out). It carries out the reaction a plastoquinone + NADPH + (n+1) H(+)(in) = a plastoquinol + NADP(+) + n H(+)(out). Functionally, NDH-1 shuttles electrons from an unknown electron donor, via FMN and iron-sulfur (Fe-S) centers, to quinones in the respiratory and/or the photosynthetic chain. The immediate electron acceptor for the enzyme in this species is believed to be plastoquinone. Couples the redox reaction to proton translocation, and thus conserves the redox energy in a proton gradient. Cyanobacterial NDH-1 also plays a role in inorganic carbon-concentration. This chain is NAD(P)H-quinone oxidoreductase subunit N, found in Prochlorococcus marinus (strain NATL2A).